We begin with the raw amino-acid sequence, 279 residues long: Large ribosomal subunit protein uL2 (279 aa).

A disordered region spans residues 222–264; it reads GVAMNPVDHPHGGGEGRTSGGRNPVTPAGKPTKGAKTRVNKAT.

The protein belongs to the universal ribosomal protein uL2 family. As to quaternary structure, part of the 50S ribosomal subunit. Forms a bridge to the 30S subunit in the 70S ribosome.

Its function is as follows. One of the primary rRNA binding proteins. Required for association of the 30S and 50S subunits to form the 70S ribosome, for tRNA binding and peptide bond formation. It has been suggested to have peptidyltransferase activity; this is somewhat controversial. Makes several contacts with the 16S rRNA in the 70S ribosome. This is Large ribosomal subunit protein uL2 from Caulobacter sp. (strain K31).